The following is a 327-amino-acid chain: BarH-like 1 homeobox protein (327 aa).

Disordered stretches follow at residues 1 to 90, 112 to 184, and 305 to 327; these read MEGS…AQSR, APYS…ARTA, and GASEPPPPLPPLAGVLPRAAQPR. The segment covering 33-54 has biased composition (low complexity); it reads RSPLELSPRSESSSDCSSPASP. Polar residues predominate over residues 79–90; the sequence is QPGQLSAPAQSR. Composition is skewed to basic and acidic residues over residues 133–143 and 152–166; these read AAEDFRDKLDK and SEYKVKEEGDREISS. Residues 178–237 constitute a DNA-binding region (homeobox); the sequence is PRKARTAFTDHQLAQLERSFERQKYLSVQDRMELAASLNLTDTQVKTWYQNRRTKWKRQT. Residues 316–327 show a composition bias toward low complexity; it reads LAGVLPRAAQPR.

The protein belongs to the BAR homeobox family.

It is found in the nucleus. This is BarH-like 1 homeobox protein (BARHL1) from Homo sapiens (Human).